A 327-amino-acid chain; its full sequence is Phenylalanine--tRNA ligase alpha subunit (327 aa).

Residue E252 participates in Mg(2+) binding.

Belongs to the class-II aminoacyl-tRNA synthetase family. Phe-tRNA synthetase alpha subunit type 1 subfamily. In terms of assembly, tetramer of two alpha and two beta subunits. The cofactor is Mg(2+).

It localises to the cytoplasm. It catalyses the reaction tRNA(Phe) + L-phenylalanine + ATP = L-phenylalanyl-tRNA(Phe) + AMP + diphosphate + H(+). This Vibrio cholerae serotype O1 (strain ATCC 39541 / Classical Ogawa 395 / O395) protein is Phenylalanine--tRNA ligase alpha subunit.